A 360-amino-acid chain; its full sequence is Arginase, non-hepatic 2 (360 aa).

Residues histidine 122, aspartate 145, histidine 147, and aspartate 149 each coordinate Mn(2+). Substrate-binding positions include histidine 147–asparagine 151, serine 158–asparagine 160, and aspartate 204. 2 residues coordinate Mn(2+): aspartate 253 and aspartate 255. Positions 267 and 298 each coordinate substrate.

The protein belongs to the arginase family. Homotrimer. Mn(2+) is required as a cofactor. As to expression, expressed at differing tadpole stages in tail, intestine, hindlimb and trunk region. Strongest in tadpole tail.

It carries out the reaction L-arginine + H2O = urea + L-ornithine. The protein operates within nitrogen metabolism; urea cycle; L-ornithine and urea from L-arginine: step 1/1. Functionally, as well as its role in the urea cycle, may be involved in tissue remodeling. This chain is Arginase, non-hepatic 2 (arg2-b), found in Xenopus laevis (African clawed frog).